The primary structure comprises 256 residues: Imidazole glycerol phosphate synthase subunit HisF (256 aa).

Active-site residues include Asp12 and Asp131.

The protein belongs to the HisA/HisF family. As to quaternary structure, heterodimer of HisH and HisF.

It localises to the cytoplasm. The catalysed reaction is 5-[(5-phospho-1-deoxy-D-ribulos-1-ylimino)methylamino]-1-(5-phospho-beta-D-ribosyl)imidazole-4-carboxamide + L-glutamine = D-erythro-1-(imidazol-4-yl)glycerol 3-phosphate + 5-amino-1-(5-phospho-beta-D-ribosyl)imidazole-4-carboxamide + L-glutamate + H(+). It participates in amino-acid biosynthesis; L-histidine biosynthesis; L-histidine from 5-phospho-alpha-D-ribose 1-diphosphate: step 5/9. In terms of biological role, IGPS catalyzes the conversion of PRFAR and glutamine to IGP, AICAR and glutamate. The HisF subunit catalyzes the cyclization activity that produces IGP and AICAR from PRFAR using the ammonia provided by the HisH subunit. This Pseudomonas fluorescens (strain ATCC BAA-477 / NRRL B-23932 / Pf-5) protein is Imidazole glycerol phosphate synthase subunit HisF.